Consider the following 527-residue polypeptide: Oviduct-specific glycoprotein (527 aa).

The first 21 residues, 1 to 21 (MGKLLLWVGLVLVLKHHNGAA), serve as a signal peptide directing secretion. One can recognise a GH18 domain in the interval 22–385 (HKLVCYFANW…YMLNDLLLKA (364 aa)). Cysteines 26 and 51 form a disulfide. N-linked (GlcNAc...) asparagine glycosylation is present at Asn62. Residues 71 to 72 (AR), 98 to 101 (GGWN), Tyr142, 211 to 214 (LSYD), and Trp355 contribute to the chitin site. 2 N-linked (GlcNAc...) asparagine glycosylation sites follow: Asn402 and Asn441. The interval 433 to 527 (TETHGRSDNM…MTLPSGKRSD (95 aa)) is disordered.

Belongs to the glycosyl hydrolase 18 family. In terms of tissue distribution, oviduct.

Its subcellular location is the cytoplasmic vesicle. The protein localises to the secretory vesicle. Binds to oocyte zona pellucida in vivo. May play a role in the fertilization process and/or early embryonic development. This Sus scrofa (Pig) protein is Oviduct-specific glycoprotein (OVGP1).